A 364-amino-acid chain; its full sequence is UDP-N-acetylglucosamine--N-acetylmuramyl-(pentapeptide) pyrophosphoryl-undecaprenol N-acetylglucosamine transferase (364 aa).

Residues 10 to 12, asparagine 128, arginine 170, serine 199, isoleucine 250, and glutamine 295 each bind UDP-N-acetyl-alpha-D-glucosamine; that span reads TGG.

Belongs to the glycosyltransferase 28 family. MurG subfamily.

It localises to the cell inner membrane. It carries out the reaction di-trans,octa-cis-undecaprenyl diphospho-N-acetyl-alpha-D-muramoyl-L-alanyl-D-glutamyl-meso-2,6-diaminopimeloyl-D-alanyl-D-alanine + UDP-N-acetyl-alpha-D-glucosamine = di-trans,octa-cis-undecaprenyl diphospho-[N-acetyl-alpha-D-glucosaminyl-(1-&gt;4)]-N-acetyl-alpha-D-muramoyl-L-alanyl-D-glutamyl-meso-2,6-diaminopimeloyl-D-alanyl-D-alanine + UDP + H(+). It functions in the pathway cell wall biogenesis; peptidoglycan biosynthesis. Cell wall formation. Catalyzes the transfer of a GlcNAc subunit on undecaprenyl-pyrophosphoryl-MurNAc-pentapeptide (lipid intermediate I) to form undecaprenyl-pyrophosphoryl-MurNAc-(pentapeptide)GlcNAc (lipid intermediate II). The protein is UDP-N-acetylglucosamine--N-acetylmuramyl-(pentapeptide) pyrophosphoryl-undecaprenol N-acetylglucosamine transferase of Chlorobium phaeobacteroides (strain DSM 266 / SMG 266 / 2430).